The following is a 175-amino-acid chain: Deoxyuridine 5'-triphosphate nucleotidohydrolase (175 aa).

Substrate-binding positions include 67–69, Asn80, 84–86, and Lys94; these read RSG and TVD. Positions 138 to 175 are disordered; sequence RAEGGFGSTGGHAAVGADTNGQQGGNRYASVVSDRKGQ.

Belongs to the dUTPase family. Mg(2+) serves as cofactor.

It catalyses the reaction dUTP + H2O = dUMP + diphosphate + H(+). Its pathway is pyrimidine metabolism; dUMP biosynthesis; dUMP from dCTP (dUTP route): step 2/2. In terms of biological role, this enzyme is involved in nucleotide metabolism: it produces dUMP, the immediate precursor of thymidine nucleotides and it decreases the intracellular concentration of dUTP so that uracil cannot be incorporated into DNA. The polypeptide is Deoxyuridine 5'-triphosphate nucleotidohydrolase (Streptomyces avermitilis (strain ATCC 31267 / DSM 46492 / JCM 5070 / NBRC 14893 / NCIMB 12804 / NRRL 8165 / MA-4680)).